A 413-amino-acid chain; its full sequence is Tyrosine--tRNA ligase (413 aa).

The 'HIGH' region motif lies at 57-66 (PTAPDIHLGH). The short motif at 241 to 245 (KMSKS) is the 'KMSKS' region element. Lysine 244 serves as a coordination point for ATP. The S4 RNA-binding domain maps to 351-412 (VWLPRLMVQA…GKRKFARLHT (62 aa)).

The protein belongs to the class-I aminoacyl-tRNA synthetase family. TyrS type 2 subfamily. Homodimer.

The protein resides in the cytoplasm. It catalyses the reaction tRNA(Tyr) + L-tyrosine + ATP = L-tyrosyl-tRNA(Tyr) + AMP + diphosphate + H(+). Its function is as follows. Catalyzes the attachment of tyrosine to tRNA(Tyr) in a two-step reaction: tyrosine is first activated by ATP to form Tyr-AMP and then transferred to the acceptor end of tRNA(Tyr). The protein is Tyrosine--tRNA ligase of Moorella thermoacetica (strain ATCC 39073 / JCM 9320).